A 278-amino-acid polypeptide reads, in one-letter code: Orotidine 5'-phosphate decarboxylase (278 aa).

Residue Lys95 is the Proton donor of the active site.

The protein belongs to the OMP decarboxylase family. Type 2 subfamily.

It carries out the reaction orotidine 5'-phosphate + H(+) = UMP + CO2. It functions in the pathway pyrimidine metabolism; UMP biosynthesis via de novo pathway; UMP from orotate: step 2/2. This Mycobacterium ulcerans (strain Agy99) protein is Orotidine 5'-phosphate decarboxylase.